Here is a 322-residue protein sequence, read N- to C-terminus: Ferredoxin--NADP reductase (322 aa).

Leu87, Phe119, Asp279, and Thr320 together coordinate FAD.

This sequence belongs to the ferredoxin--NADP reductase type 2 family. As to quaternary structure, homodimer. FAD is required as a cofactor.

It catalyses the reaction 2 reduced [2Fe-2S]-[ferredoxin] + NADP(+) + H(+) = 2 oxidized [2Fe-2S]-[ferredoxin] + NADPH. This chain is Ferredoxin--NADP reductase, found in Streptococcus suis (strain 98HAH33).